We begin with the raw amino-acid sequence, 136 residues long: DNA-directed RNA polymerase subunit omega (136 aa).

A compositionally biased stretch (low complexity) spans S90–S102. The disordered stretch occupies residues S90 to E136. Basic and acidic residues predominate over residues S103–R120.

The protein belongs to the RNA polymerase subunit omega family. As to quaternary structure, the RNAP catalytic core consists of 2 alpha, 1 beta, 1 beta' and 1 omega subunit. When a sigma factor is associated with the core the holoenzyme is formed, which can initiate transcription.

The enzyme catalyses RNA(n) + a ribonucleoside 5'-triphosphate = RNA(n+1) + diphosphate. Functionally, promotes RNA polymerase assembly. Latches the N- and C-terminal regions of the beta' subunit thereby facilitating its interaction with the beta and alpha subunits. In Methylorubrum populi (strain ATCC BAA-705 / NCIMB 13946 / BJ001) (Methylobacterium populi), this protein is DNA-directed RNA polymerase subunit omega.